The following is a 313-amino-acid chain: MTKIVFMGTPAFSVPILESLIEAGYDVQAVVTQPDRPVGRKKVITPTPVKEAALKHNLLVLQPEKISGSPEMEKVIDLAPDLIVTAAFGQFLPEKILKAPKLGAINVHASLLPKYRGGAPVHYSIIEGEKETGVTIMEMVKKMDAGAILSQRAIPITKQDDVGTMFEKLSILGKELLLETLPKLIAGEITPIPQVEEEATFSPNITREQERIDWQKTAEAIDNQVRGMRPWPTAFTTYQGTNWKIWAVTPLTETTTSAPGTIIQRSKKALWIACGEGTVLQIDRLQPAGKGQLTIQEFLNGVGQNVAEKDKVD.

110-113 (SLLP) lines the (6S)-5,6,7,8-tetrahydrofolate pocket.

The protein belongs to the Fmt family.

It carries out the reaction L-methionyl-tRNA(fMet) + (6R)-10-formyltetrahydrofolate = N-formyl-L-methionyl-tRNA(fMet) + (6S)-5,6,7,8-tetrahydrofolate + H(+). Functionally, attaches a formyl group to the free amino group of methionyl-tRNA(fMet). The formyl group appears to play a dual role in the initiator identity of N-formylmethionyl-tRNA by promoting its recognition by IF2 and preventing the misappropriation of this tRNA by the elongation apparatus. The sequence is that of Methionyl-tRNA formyltransferase from Enterococcus faecalis (strain ATCC 700802 / V583).